Reading from the N-terminus, the 497-residue chain is Pancreatic alpha-amylase (497 aa).

Q1 bears the Pyrrolidone carboxylic acid mark. 3 disulfides stabilise this stretch: C28/C86, C70/C115, and C141/C160. 3 residues coordinate Ca(2+): N100, R158, and D167. R195 is a chloride binding site. Catalysis depends on D197, which acts as the Nucleophile. A Ca(2+)-binding site is contributed by H201. E233 serves as the catalytic Proton donor. Chloride is bound by residues N298 and R337. Intrachain disulfides connect C379–C385 and C451–C463.

The protein belongs to the glycosyl hydrolase 13 family. As to quaternary structure, monomer. Requires Ca(2+) as cofactor. The cofactor is chloride.

The protein resides in the secreted. It is found in the extracellular space. The enzyme catalyses Endohydrolysis of (1-&gt;4)-alpha-D-glucosidic linkages in polysaccharides containing three or more (1-&gt;4)-alpha-linked D-glucose units.. The protein is Pancreatic alpha-amylase of Struthio camelus (Common ostrich).